The primary structure comprises 239 residues: MENLNIVTLTGAGISAESGIPTFRGKDGLWNKFKPEELATPEAFFRNPKLVWEWYDWKRQLIAKAQPNEGHKILTKMEEEFPNFYLITQNVDGLHQRAGSKKVIELHGNIWKVRCVECGNERYEYTTPLPEIPPKCEKCGGLLRPGVVWFGESLPVDALSRAYELSREAHVFIVVGTSGVVYPAAELPFVAKENGAQVIEVNPEETPITKIADMHFKEKASTGLKKVYDYLREKYGSKG.

Residues 1–234 (MENLNIVTLT…KKVYDYLREK (234 aa)) form the Deacetylase sirtuin-type domain. NAD(+)-binding positions include 11-30 (GAGI…DGLW) and 89-92 (QNVD). His107 (proton acceptor) is an active-site residue. Zn(2+) is bound by residues Cys115, Cys118, Cys136, and Cys139. NAD(+) is bound by residues 176–178 (GTS), 202–204 (NPE), and Ala220.

This sequence belongs to the sirtuin family. Class III subfamily. Zn(2+) serves as cofactor.

It localises to the cytoplasm. It catalyses the reaction N(6)-acetyl-L-lysyl-[protein] + NAD(+) + H2O = 2''-O-acetyl-ADP-D-ribose + nicotinamide + L-lysyl-[protein]. In terms of biological role, NAD-dependent protein deacetylase which modulates the activities of several proteins which are inactive in their acetylated form. This chain is NAD-dependent protein deacylase, found in Aquifex aeolicus (strain VF5).